We begin with the raw amino-acid sequence, 633 residues long: Phosphomethylpyrimidine synthase (633 aa).

Substrate-binding positions include N245, M274, Y303, H339, 359 to 361, 400 to 403, and E439; these read SRG and DGLR. H443 is a binding site for Zn(2+). Y466 provides a ligand contact to substrate. Zn(2+) is bound at residue H507. Residues C587, C590, and C595 each contribute to the [4Fe-4S] cluster site.

It belongs to the ThiC family. In terms of assembly, homodimer. [4Fe-4S] cluster is required as a cofactor.

It catalyses the reaction 5-amino-1-(5-phospho-beta-D-ribosyl)imidazole + S-adenosyl-L-methionine = 4-amino-2-methyl-5-(phosphooxymethyl)pyrimidine + CO + 5'-deoxyadenosine + formate + L-methionine + 3 H(+). It functions in the pathway cofactor biosynthesis; thiamine diphosphate biosynthesis. Its function is as follows. Catalyzes the synthesis of the hydroxymethylpyrimidine phosphate (HMP-P) moiety of thiamine from aminoimidazole ribotide (AIR) in a radical S-adenosyl-L-methionine (SAM)-dependent reaction. The chain is Phosphomethylpyrimidine synthase from Neisseria meningitidis serogroup A / serotype 4A (strain DSM 15465 / Z2491).